A 397-amino-acid chain; its full sequence is 2,3-bisphosphoglycerate-independent phosphoglycerate mutase (397 aa).

This sequence belongs to the BPG-independent phosphoglycerate mutase family. A-PGAM subfamily.

The catalysed reaction is (2R)-2-phosphoglycerate = (2R)-3-phosphoglycerate. It participates in carbohydrate degradation; glycolysis; pyruvate from D-glyceraldehyde 3-phosphate: step 3/5. In terms of biological role, catalyzes the interconversion of 2-phosphoglycerate and 3-phosphoglycerate. The sequence is that of 2,3-bisphosphoglycerate-independent phosphoglycerate mutase from Methanosarcina acetivorans (strain ATCC 35395 / DSM 2834 / JCM 12185 / C2A).